The chain runs to 160 residues: Regulatory protein RecX (160 aa).

It belongs to the RecX family.

The protein resides in the cytoplasm. Functionally, modulates RecA activity. In Xanthomonas oryzae pv. oryzae (strain MAFF 311018), this protein is Regulatory protein RecX.